The sequence spans 315 residues: Homoserine kinase (315 aa).

ATP is bound at residue 97 to 107 (PPARGLGSSAT).

The protein belongs to the GHMP kinase family. Homoserine kinase subfamily.

The protein resides in the cytoplasm. The enzyme catalyses L-homoserine + ATP = O-phospho-L-homoserine + ADP + H(+). It participates in amino-acid biosynthesis; L-threonine biosynthesis; L-threonine from L-aspartate: step 4/5. Its function is as follows. Catalyzes the ATP-dependent phosphorylation of L-homoserine to L-homoserine phosphate. The protein is Homoserine kinase of Prochlorococcus marinus (strain SARG / CCMP1375 / SS120).